Here is a 237-residue protein sequence, read N- to C-terminus: ATP synthase subunit a (237 aa).

4 helical membrane-spanning segments follow: residues 17–37 (LSDM…AVAA), 78–98 (LGVT…PFWL), 178–198 (ILLG…CGSI), and 201–221 (MVIM…AFIF).

It belongs to the ATPase A chain family. As to quaternary structure, F-type ATPases have 2 components, CF(1) - the catalytic core - and CF(0) - the membrane proton channel. CF(1) has five subunits: alpha(3), beta(3), gamma(1), delta(1), epsilon(1). CF(0) has three main subunits: a(1), b(2) and c(9-12). The alpha and beta chains form an alternating ring which encloses part of the gamma chain. CF(1) is attached to CF(0) by a central stalk formed by the gamma and epsilon chains, while a peripheral stalk is formed by the delta and b chains.

It localises to the cell membrane. Key component of the proton channel; it plays a direct role in the translocation of protons across the membrane. This chain is ATP synthase subunit a, found in Bacillus caldotenax.